The chain runs to 38 residues: Large ribosomal subunit protein bL36 (38 aa).

This sequence belongs to the bacterial ribosomal protein bL36 family.

This Saccharophagus degradans (strain 2-40 / ATCC 43961 / DSM 17024) protein is Large ribosomal subunit protein bL36.